The chain runs to 899 residues: Probable dipeptidyl-aminopeptidase B (899 aa).

Disordered stretches follow at residues 1-37 (MARK…SDGS) and 51-84 (KITR…TENS). Over 1 to 91 (MARKDKDNGP…ENSKRNRGSR (91 aa)) the chain is Cytoplasmic. The span at 22-37 (SSASFSSTDSLSSDGS) shows a compositional bias: low complexity. The segment covering 61–74 (NPYRDDDVELERGD) has biased composition (basic and acidic residues). A helical; Signal-anchor for type II membrane protein membrane pass occupies residues 92 to 112 (LIWVVGLLCLGGWILAFVLFW). Residues 113–899 (GRRNSELSSS…QQGNSVLPVT (787 aa)) lie on the Vacuolar side of the membrane. N-linked (GlcNAc...) asparagine glycosylation is found at Asn-149, Asn-194, Asn-347, Asn-409, Asn-513, Asn-638, and Asn-643. The active-site Charge relay system is Ser-752. Asn-811 is a glycosylation site (N-linked (GlcNAc...) asparagine). Residues Asp-829 and His-862 each act as charge relay system in the active site.

It belongs to the peptidase S9B family.

It is found in the vacuole membrane. It carries out the reaction Release of an N-terminal dipeptide, Xaa-Yaa-|-Zaa-, from a polypeptide, preferentially when Yaa is Pro, provided Zaa is neither Pro nor hydroxyproline.. Its function is as follows. Type IV dipeptidyl-peptidase which removes N-terminal dipeptides sequentially from polypeptides having unsubstituted N-termini provided that the penultimate residue is proline. This chain is Probable dipeptidyl-aminopeptidase B (dapB), found in Talaromyces marneffei (strain ATCC 18224 / CBS 334.59 / QM 7333) (Penicillium marneffei).